Here is a 204-residue protein sequence, read N- to C-terminus: NAD(P)H dehydrogenase (quinone) (204 aa).

Positions 3 to 194 (VLIVFYSMYG…AGARYQGRHV (192 aa)) constitute a Flavodoxin-like domain. Residues 9–14 (SMYGHI) and 82–84 (TRF) each bind FMN. Tyrosine 11 is an NAD(+) binding site. Substrate is bound at residue tryptophan 102. Histidine 138 contributes to the FMN binding site.

The protein belongs to the WrbA family. FMN is required as a cofactor.

The enzyme catalyses a quinone + NADH + H(+) = a quinol + NAD(+). It carries out the reaction a quinone + NADPH + H(+) = a quinol + NADP(+). This is NAD(P)H dehydrogenase (quinone) from Syntrophobacter fumaroxidans (strain DSM 10017 / MPOB).